Consider the following 254-residue polypeptide: Imidazole glycerol phosphate synthase subunit HisF (254 aa).

Active-site residues include Asp-11 and Asp-130.

Belongs to the HisA/HisF family. In terms of assembly, heterodimer of HisH and HisF.

It is found in the cytoplasm. It catalyses the reaction 5-[(5-phospho-1-deoxy-D-ribulos-1-ylimino)methylamino]-1-(5-phospho-beta-D-ribosyl)imidazole-4-carboxamide + L-glutamine = D-erythro-1-(imidazol-4-yl)glycerol 3-phosphate + 5-amino-1-(5-phospho-beta-D-ribosyl)imidazole-4-carboxamide + L-glutamate + H(+). Its pathway is amino-acid biosynthesis; L-histidine biosynthesis; L-histidine from 5-phospho-alpha-D-ribose 1-diphosphate: step 5/9. Functionally, IGPS catalyzes the conversion of PRFAR and glutamine to IGP, AICAR and glutamate. The HisF subunit catalyzes the cyclization activity that produces IGP and AICAR from PRFAR using the ammonia provided by the HisH subunit. In Oceanobacillus iheyensis (strain DSM 14371 / CIP 107618 / JCM 11309 / KCTC 3954 / HTE831), this protein is Imidazole glycerol phosphate synthase subunit HisF.